Reading from the N-terminus, the 277-residue chain is Probable enoyl-CoA hydratase, mitochondrial (277 aa).

The N-terminal 42 residues, 1–42, are a transit peptide targeting the mitochondrion; the sequence is MLKQVIKTVSSSQAPKKYFFKQFCTSTTEKKGRVGLVTLNRP. Substrate contacts are provided by residues 85–88 and Gly128; that span reads ADIK.

This sequence belongs to the enoyl-CoA hydratase/isomerase family. Homohexamer; dimer of trimers.

It is found in the mitochondrion matrix. The catalysed reaction is a (3S)-3-hydroxyacyl-CoA = a (2E)-enoyl-CoA + H2O. It catalyses the reaction a 4-saturated-(3S)-3-hydroxyacyl-CoA = a (3E)-enoyl-CoA + H2O. The enzyme catalyses (3S)-3-hydroxybutanoyl-CoA = (2E)-butenoyl-CoA + H2O. It carries out the reaction 3-hydroxyisovaleryl-CoA = 3-methylbut-2-enoyl-CoA + H2O. The catalysed reaction is 3-hydroxypropanoyl-CoA = acryloyl-CoA + H2O. It catalyses the reaction 3-hydroxybutanoyl-CoA = (2E)-butenoyl-CoA + H2O. It functions in the pathway lipid metabolism; fatty acid beta-oxidation. Its function is as follows. Straight-chain enoyl-CoA thioesters from C4 up to at least C16 are processed, although with decreasing catalytic rate. The sequence is that of Probable enoyl-CoA hydratase, mitochondrial (echs1) from Dictyostelium discoideum (Social amoeba).